Reading from the N-terminus, the 394-residue chain is Sorting nexin-3 (394 aa).

Disordered regions lie at residues 1 to 82 (MAFY…FGGA) and 116 to 226 (LGGA…SATA). 2 stretches are compositionally biased toward low complexity: residues 31 to 82 (AAPG…FGGA) and 131 to 178 (AHSS…AFPS). Over residues 179–207 (GVSTSQYQPTSQGAQGASRFQSHTPSTLL) the composition is skewed to polar residues. The region spanning 272-389 (NFLEVEVRSP…AAFLQDSGWS (118 aa)) is the PX domain. A 1,2-diacyl-sn-glycero-3-phospho-(1D-myo-inositol-3-phosphate) is bound by residues Arg315, Ser317, Lys341, Arg346, and Arg355.

This sequence belongs to the sorting nexin family.

Its subcellular location is the cytoplasm. The protein resides in the golgi apparatus membrane. It is found in the prevacuolar compartment membrane. In terms of biological role, required for retention of late Golgi membrane proteins. Component of the retrieval machinery that functions by direct interaction with the cytosolic tails of certain TGN membrane proteins during the sorting/budding process at the prevacuolar compartment. Binds phosphatidylinositol 3-phosphate (PtdIns(P3)). This Mycosarcoma maydis (Corn smut fungus) protein is Sorting nexin-3 (SNX3).